Here is a 285-residue protein sequence, read N- to C-terminus: 2,3,4,5-tetrahydropyridine-2,6-dicarboxylate N-succinyltransferase (285 aa).

Substrate contacts are provided by Arg-111 and Asp-148.

This sequence belongs to the transferase hexapeptide repeat family. As to quaternary structure, homotrimer.

Its subcellular location is the cytoplasm. The catalysed reaction is (S)-2,3,4,5-tetrahydrodipicolinate + succinyl-CoA + H2O = (S)-2-succinylamino-6-oxoheptanedioate + CoA. The protein operates within amino-acid biosynthesis; L-lysine biosynthesis via DAP pathway; LL-2,6-diaminopimelate from (S)-tetrahydrodipicolinate (succinylase route): step 1/3. This Rhizobium meliloti (strain 1021) (Ensifer meliloti) protein is 2,3,4,5-tetrahydropyridine-2,6-dicarboxylate N-succinyltransferase.